Reading from the N-terminus, the 214-residue chain is MIKRFIVFGPPGVGKGTLASLVSQKYGFEHISTGNIFRSQIASNSELGIKLKEIVESGGYVPDSITNEIVKKTLADLEKEQKSYILDGYPRTLNQIEFLFSLNKAQEYSVWFLEAPSEIILKRLSGRRICPSCNAQYHIYFKKSKLDTKCEIDQSELIQRKDDQESSIIKRLEIYEKQTNSLKKYFKELGILVEIDASKDREEILKELEQKVSL.

12–17 is a binding site for ATP; it reads GVGKGT. The segment at 32-61 is NMP; sequence STGNIFRSQIASNSELGIKLKEIVESGGYV. AMP contacts are provided by residues Thr33, Arg38, 59–61, 88–91, and Gln95; these read GYV and GYPR. An LID region spans residues 126–163; sequence GRRICPSCNAQYHIYFKKSKLDTKCEIDQSELIQRKDD. Residue Arg127 coordinates ATP. Residues Cys130, Cys133, Cys150, and Asp153 each contribute to the Zn(2+) site. 2 residues coordinate AMP: Arg160 and Arg171. Lys199 lines the ATP pocket.

Belongs to the adenylate kinase family. As to quaternary structure, monomer.

It localises to the cytoplasm. It catalyses the reaction AMP + ATP = 2 ADP. It functions in the pathway purine metabolism; AMP biosynthesis via salvage pathway; AMP from ADP: step 1/1. Functionally, catalyzes the reversible transfer of the terminal phosphate group between ATP and AMP. Plays an important role in cellular energy homeostasis and in adenine nucleotide metabolism. This is Adenylate kinase from Mycoplasmopsis pulmonis (strain UAB CTIP) (Mycoplasma pulmonis).